A 180-amino-acid polypeptide reads, in one-letter code: ATP synthase subunit delta (180 aa).

It belongs to the ATPase delta chain family. In terms of assembly, F-type ATPases have 2 components, F(1) - the catalytic core - and F(0) - the membrane proton channel. F(1) has five subunits: alpha(3), beta(3), gamma(1), delta(1), epsilon(1). F(0) has three main subunits: a(1), b(2) and c(10-14). The alpha and beta chains form an alternating ring which encloses part of the gamma chain. F(1) is attached to F(0) by a central stalk formed by the gamma and epsilon chains, while a peripheral stalk is formed by the delta and b chains.

The protein resides in the cell membrane. Its function is as follows. F(1)F(0) ATP synthase produces ATP from ADP in the presence of a proton or sodium gradient. F-type ATPases consist of two structural domains, F(1) containing the extramembraneous catalytic core and F(0) containing the membrane proton channel, linked together by a central stalk and a peripheral stalk. During catalysis, ATP synthesis in the catalytic domain of F(1) is coupled via a rotary mechanism of the central stalk subunits to proton translocation. This protein is part of the stalk that links CF(0) to CF(1). It either transmits conformational changes from CF(0) to CF(1) or is implicated in proton conduction. The chain is ATP synthase subunit delta from Alkaliphilus oremlandii (strain OhILAs) (Clostridium oremlandii (strain OhILAs)).